A 294-amino-acid chain; its full sequence is Cytidine deaminase (294 aa).

2 consecutive CMP/dCMP-type deaminase domains span residues Asp48–Lys168 and Leu186–Gly294. Asn89–Glu91 contributes to the substrate binding site. Residue His102 participates in Zn(2+) binding. The active-site Proton donor is the Glu104. Cys129 and Cys132 together coordinate Zn(2+).

The protein belongs to the cytidine and deoxycytidylate deaminase family. Homodimer. Zn(2+) is required as a cofactor.

It catalyses the reaction cytidine + H2O + H(+) = uridine + NH4(+). The enzyme catalyses 2'-deoxycytidine + H2O + H(+) = 2'-deoxyuridine + NH4(+). In terms of biological role, this enzyme scavenges exogenous and endogenous cytidine and 2'-deoxycytidine for UMP synthesis. The polypeptide is Cytidine deaminase (Salmonella dublin (strain CT_02021853)).